We begin with the raw amino-acid sequence, 449 residues long: Putative cytochrome P450 135A1 (449 aa).

C383 lines the heme pocket.

It belongs to the cytochrome P450 family. Heme is required as a cofactor.

The chain is Putative cytochrome P450 135A1 (cyp135A1) from Mycobacterium tuberculosis (strain CDC 1551 / Oshkosh).